We begin with the raw amino-acid sequence, 951 residues long: Cadmium/zinc-transporting ATPase HMA2 (951 aa).

At 1–83 (MASKKMTKSY…VRVTGETNFK (83 aa)) the chain is on the cytoplasmic side. In terms of domain architecture, HMA spans 7–73 (TKSYFDVLGI…ALNQAQLEAN (67 aa)). Residues 84–105 (NKWPSPFAVVSGILLLLSFFKY) traverse the membrane as a helical segment. At 106 to 108 (LYS) the chain is on the extracellular side. Residues 109 to 128 (PFRWLAVAAVVAGIYPILAK) form a helical membrane-spanning segment. Residues 129–135 (AVASLAR) are Cytoplasmic-facing. The chain crosses the membrane as a helical span at residues 136–156 (FRIDINILVVVTVGATIGMQD). Tyrosine 157 is a topological domain (extracellular). Residues 158 to 178 (TEAAVVVFLFTIAEWLQSRAS) form a helical membrane-spanning segment. Over 179-304 (YKASAVMQSL…KTETQRFIDK (126 aa)) the chain is Cytoplasmic. Residues 305-327 (CSKYYTPAIILISICFVAIPFAL) traverse the membrane as a helical segment. Residues 328–335 (KVHNLKHW) lie on the Extracellular side of the membrane. Residues 336 to 353 (VHLALVVLVSACPCGLIL) traverse the membrane as a helical segment. Residues 354 to 647 (STPVATFCAL…KLAKRAKRKV (294 aa)) lie on the Cytoplasmic side of the membrane. Aspartate 391 functions as the 4-aspartylphosphate intermediate in the catalytic mechanism. 2 residues coordinate Mg(2+): aspartate 592 and aspartate 596. Residues 648–667 (VENVVISITMKGAILALAFA) traverse the membrane as a helical segment. Residues 668 to 671 (GHPL) lie on the Extracellular side of the membrane. A helical membrane pass occupies residues 672–691 (IWAAVLADVGTCLLVILNSM). Residues 692–951 (LLLSDKHKTG…VGTLKEIVIE (260 aa)) lie on the Cytoplasmic side of the membrane. Residues 841-851 (ELQQSCHDKPS) are compositionally biased toward basic and acidic residues. The segment at 841–866 (ELQQSCHDKPSGLDIGTGPKHEGSST) is disordered.

This sequence belongs to the cation transport ATPase (P-type) (TC 3.A.3) family. Type IB subfamily. In terms of tissue distribution, predominantly expressed in the vascular tissues of roots, stems, and leaves. Also detected in developing anthers.

The protein resides in the cell membrane. The catalysed reaction is Zn(2+)(in) + ATP + H2O = Zn(2+)(out) + ADP + phosphate + H(+). It catalyses the reaction Cd(2+)(in) + ATP + H2O = Cd(2+)(out) + ADP + phosphate + H(+). In terms of biological role, plays an important role in zinc transport and homeostasis. Could also be involved in cadmium detoxification. The sequence is that of Cadmium/zinc-transporting ATPase HMA2 (HMA2) from Arabidopsis thaliana (Mouse-ear cress).